We begin with the raw amino-acid sequence, 339 residues long: tRNA N6-adenosine threonylcarbamoyltransferase (339 aa).

Residues histidine 114 and histidine 118 each coordinate Fe cation. Substrate-binding positions include 137-141, aspartate 170, glycine 183, aspartate 187, and asparagine 277; that span reads VVSGG. A Fe cation-binding site is contributed by aspartate 305.

The protein belongs to the KAE1 / TsaD family. Fe(2+) is required as a cofactor.

Its subcellular location is the cytoplasm. It carries out the reaction L-threonylcarbamoyladenylate + adenosine(37) in tRNA = N(6)-L-threonylcarbamoyladenosine(37) in tRNA + AMP + H(+). Its function is as follows. Required for the formation of a threonylcarbamoyl group on adenosine at position 37 (t(6)A37) in tRNAs that read codons beginning with adenine. Is involved in the transfer of the threonylcarbamoyl moiety of threonylcarbamoyl-AMP (TC-AMP) to the N6 group of A37, together with TsaE and TsaB. TsaD likely plays a direct catalytic role in this reaction. The chain is tRNA N6-adenosine threonylcarbamoyltransferase from Clostridium beijerinckii (strain ATCC 51743 / NCIMB 8052) (Clostridium acetobutylicum).